The chain runs to 689 residues: Collagen alpha-2(IX) chain (689 aa).

The first 23 residues, 1–23 (MAAATASPRSLLVLLQVVVLALA), serve as a signal peptide directing secretion. Positions 26-518 (RGPPGERGPP…QPGRQGVEGR (493 aa)) are disordered. The triple-helical region 4 (COL4) stretch occupies residues 27–163 (GPPGERGPPG…PGKPGRPGTI (137 aa)). Residues 31 to 43 (ERGPPGPPGPPGV) show a composition bias toward pro residues. Residues 44 to 56 (PGSDGIDGDNGPP) are compositionally biased toward low complexity. 2 stretches are compositionally biased toward pro residues: residues 106–127 (LPGP…PGPV) and 144–157 (PDGP…PGKP). Proline 160 carries the post-translational modification 4-hydroxyproline. Residues 164 to 180 (QGLEGSADFLCPTNCPP) form a nonhelical region 4 (NC4) region. O-linked (Xyl...) (glycosaminoglycan) serine glycosylation occurs at serine 169. Residues 181-519 (GMKGPPGLQG…PGRQGVEGRD (339 aa)) form a triple-helical region 3 (COL3) region. Residue lysine 183 is modified to 5-hydroxylysine. O-linked (Gal...) hydroxylysine glycosylation occurs at lysine 183. The span at 343–352 (GTKGGPGDQG) shows a compositional bias: gly residues. Low complexity-rich tracts occupy residues 353 to 366 (EPGP…SGPP) and 393 to 413 (RGPV…EQGP). The tract at residues 520-549 (ATDQHIVDVALKMLQEQLAEVAVSAKREAL) is nonhelical region 3 (NC3). A triple-helical region 2 (COL2) region spans residues 550–632 (GAVGMMGPPG…PGLPGRPGQA (83 aa)). The disordered stretch occupies residues 554-663 (MMGPPGPPGP…LPGPVGLPGF (110 aa)). A compositionally biased stretch (pro residues) spans 557 to 566 (PPGPPGPPGY). Residues 599–611 (KRGEKGDPGEVGR) are compositionally biased toward basic and acidic residues. The interval 633–634 (IN) is nonhelical region 2 (NC2). A triple-helical region 1 (COL1) region spans residues 635–664 (GKDGDRGSPGAPGEAGRPGLPGPVGLPGFC). Positions 665-689 (EPAACLGASAYASARLTEPGSIKGP) are nonhelical region 1 (NC1).

Belongs to the fibril-associated collagens with interrupted helices (FACIT) family. In terms of assembly, heterotrimer of an alpha 1(IX), an alpha 2(IX) and an alpha 3(IX) chain. The chains are linked to each other by interchain disulfide bonds. Trimers are also cross-linked via hydroxylysines. Covalently linked to the telopeptides of type II collagen by lysine-derived cross-links. In terms of processing, prolines at the third position of the tripeptide repeating unit (G-X-Y) are hydroxylated in some or all of the chains.

The protein localises to the secreted. It is found in the extracellular space. It localises to the extracellular matrix. Functionally, structural component of hyaline cartilage and vitreous of the eye. The polypeptide is Collagen alpha-2(IX) chain (Homo sapiens (Human)).